A 532-amino-acid polypeptide reads, in one-letter code: Glucan synthesis regulatory protein (532 aa).

The segment at 374–532 is disordered; sequence TANKRKSMAP…DAEDMKDIEI (159 aa). Low complexity predominate over residues 381–393; that stretch reads MAPSMASASGMRS. A compositionally biased stretch (polar residues) spans 447–457; it reads PTTSLTASNAS. A compositionally biased stretch (basic and acidic residues) spans 475–516; it reads SGEHSKEDIKVNEDSPAKERTSEDKEKKPETEANGKATESKG.

Belongs to the KNR4/SMI1 family.

Functionally, involved in the regulation of 1,3-beta-glucan synthase activity and cell-wall formation. This is Glucan synthesis regulatory protein (cot-2) from Neurospora crassa (strain ATCC 24698 / 74-OR23-1A / CBS 708.71 / DSM 1257 / FGSC 987).